We begin with the raw amino-acid sequence, 201 residues long: 3-mercaptopropionate dioxygenase (201 aa).

His89, His91, and His142 together coordinate Fe cation.

The protein belongs to the cysteine dioxygenase family. In terms of assembly, forms homodimer in the crystal; however, there is no evidence that the dimer exists under physiological conditions or has biological significance. Fe(2+) is required as a cofactor.

The catalysed reaction is 3-sulfanylpropanoate + O2 = 3-sulfinopropanoate + H(+). Thiol dioxygenase that catalyzes the dioxygenation of 3-mercaptopropionate (3-MPA) to 3-sulfinopropionate (3-SPA). To a lesser extent (40-fold lower efficiency), is also able to oxidize cysteine to cysteine sulfinate (CSA). Cannot use N-acetyl-L-cysteine, homocysteine, and cysteamine as substrates. The physiological role of this enzyme is unclear. This Pseudomonas aeruginosa (strain ATCC 15692 / DSM 22644 / CIP 104116 / JCM 14847 / LMG 12228 / 1C / PRS 101 / PAO1) protein is 3-mercaptopropionate dioxygenase.